Consider the following 247-residue polypeptide: UPF0280 protein MmarC5_0355 (247 aa).

This sequence belongs to the UPF0280 family.

This is UPF0280 protein MmarC5_0355 from Methanococcus maripaludis (strain C5 / ATCC BAA-1333).